A 68-amino-acid chain; its full sequence is Beta-defensin 1 (68 aa).

The N-terminal stretch at 1–21 (MRTSYLLLFTLCLLLSEMASG) is a signal peptide. Positions 22 to 32 (GNFLTGLGHRS) are excised as a propeptide. Cystine bridges form between C37–C66, C44–C59, and C49–C67.

Belongs to the beta-defensin family. In terms of assembly, monomer. Homodimer.

It localises to the secreted. The protein localises to the membrane. Its function is as follows. Has bactericidal activity. May act as a ligand for C-C chemokine receptor CCR6. Positively regulates the sperm motility and bactericidal activity in a CCR6-dependent manner. Binds to CCR6 and triggers Ca2+ mobilization in the sperm which is important for its motility. This is Beta-defensin 1 (DEFB1) from Pongo pygmaeus (Bornean orangutan).